The primary structure comprises 532 residues: 3-hydroxy-3-methylglutaryl-coenzyme A reductase 1 (532 aa).

Residues 63-83 (FATVVYLVSLFAHPDAPATTT) traverse the membrane as a helical segment. A linker region spans residues 77-117 (DAPATTTGDDDDGQGGSRRARPAAAEPAPMHGHGGGMMEAD). A disordered region spans residues 78–111 (APATTTGDDDDGQGGSRRARPAAAEPAPMHGHGG). A compositionally biased stretch (low complexity) spans 98–107 (PAAAEPAPMH). Residues 118–532 (DEEIVAAVAS…SSKDVAKAAS (415 aa)) form a catalytic region. The active-site Charge relay system is the Glu-211. Residue Asn-275 is glycosylated (N-linked (GlcNAc...) asparagine). Catalysis depends on charge relay system residues Lys-343 and Asp-419. The active-site Proton donor is His-517. An N-linked (GlcNAc...) asparagine glycan is attached at Asn-521.

The protein belongs to the HMG-CoA reductase family.

Its subcellular location is the endoplasmic reticulum membrane. The catalysed reaction is (R)-mevalonate + 2 NADP(+) + CoA = (3S)-3-hydroxy-3-methylglutaryl-CoA + 2 NADPH + 2 H(+). It functions in the pathway metabolic intermediate biosynthesis; (R)-mevalonate biosynthesis; (R)-mevalonate from acetyl-CoA: step 3/3. In terms of biological role, catalyzes the synthesis of mevalonate. The specific precursor of all isoprenoid compounds present in plants. The chain is 3-hydroxy-3-methylglutaryl-coenzyme A reductase 1 (HMG1) from Oryza sativa subsp. japonica (Rice).